Here is a 634-residue protein sequence, read N- to C-terminus: Threonine--tRNA ligase (634 aa).

Residues 1–61 enclose the TGS domain; sequence MFEVKLKDGS…DSDCEVQFVK (61 aa). The tract at residues 242–532 is catalytic; that stretch reads DHRKIGKEMG…LIEHYAGKFP (291 aa). Residues cysteine 333, histidine 384, and histidine 509 each contribute to the Zn(2+) site.

Belongs to the class-II aminoacyl-tRNA synthetase family. Homodimer. Zn(2+) is required as a cofactor.

Its subcellular location is the cytoplasm. The catalysed reaction is tRNA(Thr) + L-threonine + ATP = L-threonyl-tRNA(Thr) + AMP + diphosphate + H(+). Its function is as follows. Catalyzes the attachment of threonine to tRNA(Thr) in a two-step reaction: L-threonine is first activated by ATP to form Thr-AMP and then transferred to the acceptor end of tRNA(Thr). Also edits incorrectly charged L-seryl-tRNA(Thr). This Finegoldia magna (strain ATCC 29328 / DSM 20472 / WAL 2508) (Peptostreptococcus magnus) protein is Threonine--tRNA ligase.